The chain runs to 581 residues: Multicopper oxidase LPR1 (581 aa).

The first 28 residues, 1–28 (MESLLCRRRIKRVMVLIIALTWLRSTCG), serve as a signal peptide directing secretion. Residues histidine 148, histidine 150, histidine 196, and histidine 198 each coordinate Cu cation. N-linked (GlcNAc...) asparagine glycosylation is found at asparagine 254, asparagine 298, asparagine 386, and asparagine 458. Residues 283–352 (PRLNVRRRKY…DVVVDFYKSP (70 aa)) form the Plastocyanin-like domain. Positions 464, 467, and 469 each coordinate Cu cation. N-linked (GlcNAc...) asparagine glycosylation is present at asparagine 546. Histidine 562, cysteine 563, histidine 564, histidine 568, and methionine 573 together coordinate Cu cation.

It belongs to the multicopper oxidase family. The cofactor is Cu cation.

Its subcellular location is the endoplasmic reticulum membrane. Functionally, multicopper oxidase that may be involved in copper homeostasis and oxidative stress response, and that is necessary for root growth inhibition by low phosphate conditions. Functions together with LPR2 and PDR2 in a common pathway that adjusts root meristem activity to phosphate availability. Oxidizes the substrate 2,2'-azinobis-(3-ethylbenzthiazoline-6-sulphonate) in vitro. This is Multicopper oxidase LPR1 (LPR1) from Arabidopsis thaliana (Mouse-ear cress).